We begin with the raw amino-acid sequence, 106 residues long: Large ribosomal subunit protein eL42 (106 aa).

Belongs to the eukaryotic ribosomal protein eL42 family.

The protein is Large ribosomal subunit protein eL42 (RPL44) of Cyberlindnera jadinii (Torula yeast).